A 192-amino-acid polypeptide reads, in one-letter code: Amelogenin, Y isoform (192 aa).

The first 16 residues, 1-16 (MGTWILFACLLGAAYS), serve as a signal peptide directing secretion. Positions 73-192 (QSPQNHALQP…TDKTKREEVD (120 aa)) are disordered. The span at 87–105 (PMVPAQQPVVPQQPMMPVP) shows a compositional bias: low complexity. Residues 108–117 (HSMTPIQHHQ) are compositionally biased toward polar residues. A compositionally biased stretch (pro residues) spans 132-173 (PIQPQPHQPLQPQPPVHPIQRLPPQPPLPPIFPMQPLPPVLP).

It belongs to the amelogenin family.

The protein resides in the secreted. Its subcellular location is the extracellular space. The protein localises to the extracellular matrix. Its function is as follows. Plays a role in the biomineralization of teeth. Seems to regulate the formation of crystallites during the secretory stage of tooth enamel development. Thought to play a major role in the structural organization and mineralization of developing enamel. The polypeptide is Amelogenin, Y isoform (AMELY) (Bos taurus (Bovine)).